The chain runs to 147 residues: UPF0306 protein KPK_0562 (147 aa).

The protein belongs to the UPF0306 family.

The polypeptide is UPF0306 protein KPK_0562 (Klebsiella pneumoniae (strain 342)).